A 296-amino-acid chain; its full sequence is uncharacterized protein (296 aa).

The protein to Synechocystis PCC 6803 sll0787 and M.jannaschii MJ0640.

This is an uncharacterized protein from Methanocaldococcus jannaschii (strain ATCC 43067 / DSM 2661 / JAL-1 / JCM 10045 / NBRC 100440) (Methanococcus jannaschii).